Consider the following 1921-residue polypeptide: Disks large homolog 5 (1921 aa).

A CARD domain is found at 1-90 (MEPQRRELLA…HLLPILYLNG (90 aa)). Residues 116-143 (ESSSSLSSVGTTGKAPSPPPLLTEQQAN) are disordered. Residues 139–601 (EQQANDTVEN…KEARFRQLMA (463 aa)) adopt a coiled-coil conformation. Phosphoserine occurs at positions 264 and 295. 2 consecutive PDZ domains span residues 620 to 710 (VVEF…RRRK) and 705 to 796 (VVRR…LKVF). The tract at residues 857 to 898 (ELGHSGGSSSFLHKPFSGSSSPVSPQACPSTSERSLNSFRSD) is disordered. The span at 873 to 898 (SGSSSPVSPQACPSTSERSLNSFRSD) shows a compositional bias: polar residues. Serine 900 is modified (phosphoserine). A disordered region spans residues 930 to 1121 (EVPLDKIDPE…RPKSAPSFRP (192 aa)). A Phosphothreonine modification is found at threonine 984. A Phosphoserine modification is found at serine 1000. Threonine 1011 carries the phosphothreonine modification. A compositionally biased stretch (basic and acidic residues) spans 1017–1030 (RRSDSIKFQHRLET). At serine 1021 the chain carries Phosphoserine. A compositionally biased stretch (pro residues) spans 1045–1055 (TSPPSAPPPSM). A Phosphothreonine modification is found at threonine 1183. Disordered stretches follow at residues 1204–1227 (VLPC…SVQH), 1243–1266 (YSEM…SSSN), and 1280–1343 (PRYP…KDRP). Serine 1209 is modified (phosphoserine). A compositionally biased stretch (polar residues) spans 1217 to 1227 (GSQSLSPSVQH). Residues 1252-1266 (SNSLPSSARLGSSSN) are compositionally biased toward low complexity. The residue at position 1263 (serine 1263) is a Phosphoserine. Residues 1292–1324 (GSLSHSECSTPPRSPLNIDTLSSCSQPQTTAST) are compositionally biased toward polar residues. Serine 1334 carries the post-translational modification Phosphoserine. The PDZ 3 domain occupies 1350–1429 (HVKVQKGSEP…TITILAQYNP (80 aa)). Polar residues-rich tracts occupy residues 1434 to 1443 (LNSHSRSSSH), 1450 to 1460 (PHSTLQGSSAG), and 1483 to 1495 (AKQS…SVGD). A disordered region spans residues 1434 to 1501 (LNSHSRSSSH…SVGDTTKKTP (68 aa)). Positions 1504–1585 (RIVFIKKSQL…SLRLKVQYRH (82 aa)) constitute a PDZ 4 domain. The 69-residue stretch at 1596–1664 (GDSFYIRALY…PSKYVMDQEF (69 aa)) folds into the SH3 domain. Serine 1669 is subject to Phosphoserine. Residues 1724–1907 (DSVSLAYQRV…ICTQILAMVS (184 aa)) form the Guanylate kinase-like domain.

This sequence belongs to the MAGUK family. Interacts with MPP1. Interacts with CTNNB1 and with the third SH3 domain of SORBS3 to form a ternary complex. Interacts (via coiled-coil domain) with MARK3. Interacts (via PDZ domain 3) with STK3/MST2 and STK4/MST1. Interacts with SCRIB. Interacts with CTNB1. Interacts with SMO and (via PDZ4 or guanylate kinase-like domain) with KIF7. As to expression, brain (at protein level).

The protein localises to the cell junction. The protein resides in the cell membrane. It localises to the postsynaptic density. It is found in the cytoplasm. Its subcellular location is the cytoskeleton. The protein localises to the cilium basal body. Its function is as follows. Acts as a regulator of the Hippo signaling pathway. Negatively regulates the Hippo signaling pathway by mediating the interaction of MARK3 with STK3/4, bringing them together to promote MARK3-dependent hyperphosphorylation and inactivation of STK3 kinase activity toward LATS1. Positively regulates the Hippo signaling by mediating the interaction of SCRIB with STK4/MST1 and LATS1 which is important for the activation of the Hippo signaling pathway. Involved in regulating cell proliferation, maintenance of epithelial polarity, epithelial-mesenchymal transition (EMT), cell migration and invasion. Plays an important role in dendritic spine formation and synaptogenesis in cortical neurons; regulates synaptogenesis by enhancing the cell surface localization of N-cadherin. Acts as a positive regulator of hedgehog (Hh) signaling pathway. Plays a critical role in the early point of the SMO activity cycle by interacting with SMO at the ciliary base to induce the accumulation of KIF7 and GLI2 at the ciliary tip for GLI2 activation. This Mus musculus (Mouse) protein is Disks large homolog 5 (Dlg5).